The sequence spans 342 residues: S-adenosylmethionine:tRNA ribosyltransferase-isomerase (342 aa).

The protein belongs to the QueA family. As to quaternary structure, monomer.

The protein localises to the cytoplasm. The catalysed reaction is 7-aminomethyl-7-carbaguanosine(34) in tRNA + S-adenosyl-L-methionine = epoxyqueuosine(34) in tRNA + adenine + L-methionine + 2 H(+). The protein operates within tRNA modification; tRNA-queuosine biosynthesis. Its function is as follows. Transfers and isomerizes the ribose moiety from AdoMet to the 7-aminomethyl group of 7-deazaguanine (preQ1-tRNA) to give epoxyqueuosine (oQ-tRNA). The polypeptide is S-adenosylmethionine:tRNA ribosyltransferase-isomerase (Listeria innocua serovar 6a (strain ATCC BAA-680 / CLIP 11262)).